The primary structure comprises 768 residues: Phosphoribosylformylglycinamidine synthase subunit PurL (768 aa).

His48 is a catalytic residue. Residues Tyr51 and Lys90 each contribute to the ATP site. Glu92 contributes to the Mg(2+) binding site. Residues 93-96 and Arg115 contribute to the substrate site; that span reads SHNH. Catalysis depends on His94, which acts as the Proton acceptor. Position 116 (Asp116) interacts with Mg(2+). Gln239 provides a ligand contact to substrate. Asp267 is a binding site for Mg(2+). 311–313 is a substrate binding site; that stretch reads ESQ. 2 residues coordinate ATP: Asp507 and Gly544. Asn545 is a binding site for Mg(2+). Ser547 provides a ligand contact to substrate.

It belongs to the FGAMS family. Monomer. Part of the FGAM synthase complex composed of 1 PurL, 1 PurQ and 2 PurS subunits.

It localises to the cytoplasm. The enzyme catalyses N(2)-formyl-N(1)-(5-phospho-beta-D-ribosyl)glycinamide + L-glutamine + ATP + H2O = 2-formamido-N(1)-(5-O-phospho-beta-D-ribosyl)acetamidine + L-glutamate + ADP + phosphate + H(+). It functions in the pathway purine metabolism; IMP biosynthesis via de novo pathway; 5-amino-1-(5-phospho-D-ribosyl)imidazole from N(2)-formyl-N(1)-(5-phospho-D-ribosyl)glycinamide: step 1/2. Its function is as follows. Part of the phosphoribosylformylglycinamidine synthase complex involved in the purines biosynthetic pathway. Catalyzes the ATP-dependent conversion of formylglycinamide ribonucleotide (FGAR) and glutamine to yield formylglycinamidine ribonucleotide (FGAM) and glutamate. The FGAM synthase complex is composed of three subunits. PurQ produces an ammonia molecule by converting glutamine to glutamate. PurL transfers the ammonia molecule to FGAR to form FGAM in an ATP-dependent manner. PurS interacts with PurQ and PurL and is thought to assist in the transfer of the ammonia molecule from PurQ to PurL. The chain is Phosphoribosylformylglycinamidine synthase subunit PurL from Parasynechococcus marenigrum (strain WH8102).